The chain runs to 101 residues: Urease subunit beta (101 aa).

This sequence belongs to the urease beta subunit family. In terms of assembly, heterotrimer of UreA (gamma), UreB (beta) and UreC (alpha) subunits. Three heterotrimers associate to form the active enzyme.

It localises to the cytoplasm. The catalysed reaction is urea + 2 H2O + H(+) = hydrogencarbonate + 2 NH4(+). It participates in nitrogen metabolism; urea degradation; CO(2) and NH(3) from urea (urease route): step 1/1. The chain is Urease subunit beta from Rhizobium etli (strain CIAT 652).